The sequence spans 801 residues: Palmitoyl thioesterase CPT1C (801 aa).

Over 1–49 (MAEAHQASSLLSSLSSDGAEVELSSSVWQEIYLSALRSWKRNLWRVWND) the chain is Cytoplasmic. A helical membrane pass occupies residues 50–70 (FLAGVVPATPLSWLFLFSTIQ). Residues 71–103 (LACLLQLDPSLGLMEKIKELLPDWGGQHHQLQG) lie on the Mitochondrial intermembrane side of the membrane. Residues 104–124 (LLAAAVFASCLWGTLIFTLHV) traverse the membrane as a helical segment. Residues 125 to 801 (ALRLLLSHHG…PNIPKSSTNL (677 aa)) lie on the Cytoplasmic side of the membrane. Residue His-469 is the Proton acceptor of the active site. 551–563 (GKSFIKGCHVSSD) lines the CoA pocket. Residues Tyr-585, Ser-587, and Thr-598 each coordinate (R)-carnitine. The interval 760–801 (LFQAGQQFKRQFTGLGESSGWKYSNLSCKTVDPNIPKSSTNL) is required for interaction with GRIA1.

This sequence belongs to the carnitine/choline acetyltransferase family. In terms of assembly, peripherally associated with AMPAR complex. AMPAR complex consists of an inner core made of 4 pore-forming GluA/GRIA proteins (GRIA1, GRIA2, GRIA3 and GRIA4) and 4 major auxiliary subunits arranged in a twofold symmetry. One of the two pairs of distinct binding sites is occupied either by CNIH2, CNIH3 or CACNG2, CACNG3. The other harbors CACNG2, CACNG3, CACNG4, CACNG8 or GSG1L. This inner core of AMPAR complex is complemented by outer core constituents binding directly to the GluA/GRIA proteins at sites distinct from the interaction sites of the inner core constituents. Outer core constituents include at least PRRT1, PRRT2, CKAMP44/SHISA9, FRRS1L and NRN1. The proteins of the inner and outer core serve as a platform for other, more peripherally associated AMPAR constituents, including CPT1C. Alone or in combination, these auxiliary subunits control the gating and pharmacology of the AMPAR complex and profoundly impact their biogenesis and protein processing. Interacts with SACM1L; the interaction regulates SACM1L phosphatidylinositol-3-phosphatase activity and translocation to endoplasmic reticulum/trans Golgi network in a malonyl-CoA dependent manner. Interacts with ATL1. In terms of tissue distribution, expressed in brain (at protein level).

The protein resides in the synapse. It localises to the cell projection. The protein localises to the dendrite. It is found in the axon. Its subcellular location is the endoplasmic reticulum membrane. It carries out the reaction S-hexadecanoyl-L-cysteinyl-[protein] + H2O = L-cysteinyl-[protein] + hexadecanoate + H(+). Palmitoyl thioesterase specifically expressed in the endoplasmic reticulum of neurons. Modulates the trafficking of the glutamate receptor, AMPAR, to plasma membrane through depalmitoylation of GRIA1. Also regulates AMPR trafficking through the regulation of SACM1L phosphatidylinositol-3-phosphatase activity by interaction in a malonyl-CoA dependent manner. Binds malonyl-CoA and couples malonyl-CoA to ceramide levels, necessary for proper spine maturation and contributing to systemic energy homeostasis and appetite control. Binds to palmitoyl-CoA, but does not have carnitine palmitoyltransferase 1 catalytic activity or at very low levels. The protein is Palmitoyl thioesterase CPT1C (Cpt1c) of Rattus norvegicus (Rat).